The sequence spans 189 residues: GTPase HRas (189 aa).

10-17 (GAKGVGKS) contacts GTP. Positions 32 to 40 (YDPTIEDSY) match the Effector region motif. Residues 57–61 (DTAGQ) and 116–119 (NKCD) contribute to the GTP site. 2 S-palmitoyl cysteine; by host lipidation sites follow: Cys181 and Cys184. A Cysteine methyl ester; by host modification is found at Cys186. Residue Cys186 is the site of S-farnesyl cysteine; by host attachment. A propeptide spans 187–189 (VLS) (removed in mature form).

This sequence belongs to the small GTPase superfamily. Ras family.

It localises to the host cell membrane. It catalyses the reaction GTP + H2O = GDP + phosphate + H(+). Its activity is regulated as follows. Alternates between an inactive form bound to GDP and an active form bound to GTP. Activated by a guanine nucleotide-exchange factor (GEF) and inactivated by a GTPase-activating protein (GAP). This chain is GTPase HRas (H-RAS), found in Moloney murine sarcoma virus (MoMSV).